A 1506-amino-acid chain; its full sequence is Phosphatidylinositol 3-kinase C2 domain-containing subunit gamma (1506 aa).

The interval 1-34 (MAYSWQTEPNRTEPQEDGSDTQQFHHTNQHLSSR) is disordered. Polar residues predominate over residues 20–34 (DTQQFHHTNQHLSSR). The 87-residue stretch at 285–371 (DTKFRVKISI…IQLHLQKNRD (87 aa)) folds into the PI3K-RBD domain. The C2 PI3K-type domain occupies 541–689 (LQSHLSFTVC…SPLTLQIDFP (149 aa)). The 177-residue stretch at 704–880 (RTDHEEPPRE…QELLAALQFC (177 aa)) folds into the PIK helical domain. Residues 949–1227 (DRDACSYFTS…KIKESLECFP (279 aa)) enclose the PI3K/PI4K catalytic domain. The interval 955-961 (YFTSNAS) is G-loop. The segment at 1091–1099 (GVCDRHNDN) is catalytic loop. Residues 1110-1136 (HIDFGKFLGHAQTFGGIKRDRAPFIFT) form an activation loop region. The PX domain occupies 1260–1372 (LNKTRTIQRV…SFFLSEHIQP (113 aa)). One can recognise a C2 domain in the interval 1381 to 1506 (DPGENSLDKS…KWYPLGNSII (126 aa)).

Belongs to the PI3/PI4-kinase family. Expressed predominantly in liver. Also found in kidney, lung and lymphoid tissue. Down-regulated in BeF3 cells expressing the BCR-ABL oncogene p185.

It localises to the membrane. It catalyses the reaction a 1,2-diacyl-sn-glycero-3-phospho-(1D-myo-inositol 4-phosphate) + ATP = a 1,2-diacyl-sn-glycero-3-phospho-(1D-myo-inositol-3,4-bisphosphate) + ADP + H(+). The enzyme catalyses a 1,2-diacyl-sn-glycero-3-phospho-(1D-myo-inositol) + ATP = a 1,2-diacyl-sn-glycero-3-phospho-(1D-myo-inositol-3-phosphate) + ADP + H(+). Functionally, generates phosphatidylinositol 3-phosphate (PtdIns3P) and phosphatidylinositol 3,4-bisphosphate (PtdIns(3,4)P2) that act as second messengers. May play a role in SDF1A-stimulated chemotaxis. This is Phosphatidylinositol 3-kinase C2 domain-containing subunit gamma (Pik3c2g) from Mus musculus (Mouse).